Consider the following 535-residue polypeptide: CTP synthase (535 aa).

The interval 1-266 (MKTKFIFITG…DERVVEKLNI (266 aa)) is amidoligase domain. Ser14 contacts CTP. UTP is bound at residue Ser14. ATP-binding positions include 15–20 (SIGKGL) and Asp72. Residues Asp72 and Glu140 each contribute to the Mg(2+) site. Residues 147–149 (DIE), 187–192 (KTKPTQ), and Lys223 contribute to the CTP site. UTP-binding positions include 187-192 (KTKPTQ) and Lys223. In terms of domain architecture, Glutamine amidotransferase type-1 spans 292-534 (RIAIVGKYVN…VRAALIQRDA (243 aa)). L-glutamine is bound at residue Gly354. Residue Cys381 is the Nucleophile; for glutamine hydrolysis of the active site. L-glutamine contacts are provided by residues 382–385 (LGMQ), Glu405, and Arg462. Active-site residues include His507 and Glu509.

The protein belongs to the CTP synthase family. In terms of assembly, homotetramer.

The enzyme catalyses UTP + L-glutamine + ATP + H2O = CTP + L-glutamate + ADP + phosphate + 2 H(+). It carries out the reaction L-glutamine + H2O = L-glutamate + NH4(+). It catalyses the reaction UTP + NH4(+) + ATP = CTP + ADP + phosphate + 2 H(+). It functions in the pathway pyrimidine metabolism; CTP biosynthesis via de novo pathway; CTP from UDP: step 2/2. With respect to regulation, allosterically activated by GTP, when glutamine is the substrate; GTP has no effect on the reaction when ammonia is the substrate. The allosteric effector GTP functions by stabilizing the protein conformation that binds the tetrahedral intermediate(s) formed during glutamine hydrolysis. Inhibited by the product CTP, via allosteric rather than competitive inhibition. In terms of biological role, catalyzes the ATP-dependent amination of UTP to CTP with either L-glutamine or ammonia as the source of nitrogen. Regulates intracellular CTP levels through interactions with the four ribonucleotide triphosphates. This is CTP synthase from Pelobacter propionicus (strain DSM 2379 / NBRC 103807 / OttBd1).